The following is a 383-amino-acid chain: Na(+)/H(+) antiporter NhaA (383 aa).

11 helical membrane-spanning segments follow: residues Leu-10 to Pro-30, Leu-56 to Ile-76, Ile-91 to Ser-111, Gly-121 to Gly-141, Leu-150 to Phe-170, Ser-174 to Asn-194, Val-206 to Ala-226, Pro-254 to Ser-274, Ile-289 to Phe-308, Gly-327 to Phe-347, and Ala-355 to Leu-375.

The protein belongs to the NhaA Na(+)/H(+) (TC 2.A.33) antiporter family.

It localises to the cell inner membrane. It carries out the reaction Na(+)(in) + 2 H(+)(out) = Na(+)(out) + 2 H(+)(in). Its function is as follows. Na(+)/H(+) antiporter that extrudes sodium in exchange for external protons. This is Na(+)/H(+) antiporter NhaA from Francisella tularensis subsp. tularensis (strain WY96-3418).